The chain runs to 26 residues: Histone H2B.1, sperm (26 aa).

The tract at residues 1 to 26 is disordered; it reads MPSQKSPTKRSPTKRSPQKGGKGAKR. 3 short sequence motifs (SPKK motif) span residues 6-9, 11-14, and 16-19; these read SPTK and SPQK. Residues 7 to 26 are compositionally biased toward basic residues; that stretch reads PTKRSPTKRSPQKGGKGAKR. A phosphoserine mark is found at Ser-11 and Ser-16.

This sequence belongs to the histone H2B family. In terms of assembly, the nucleosome is a histone octamer containing two molecules each of H2A, H2B, H3 and H4 assembled in one H3-H4 heterotetramer and two H2A-H2B heterodimers. The octamer wraps approximately 147 bp of DNA. In terms of processing, monoubiquitination gives a specific tag for epigenetic transcriptional activation and is also prerequisite for histone H3 'Lys-4' and 'Lys-79' methylation. Post-translationally, phosphorylated on SPKK motifs 2 and 3; which may regulate DNA binding. Dephosphorylated during maturation of spermatids to mature sperm and rephosphorylated at fertilization.

The protein resides in the nucleus. The protein localises to the chromosome. Its function is as follows. Core component of nucleosome. Nucleosomes wrap and compact DNA into chromatin, limiting DNA accessibility to the cellular machineries which require DNA as a template. Histones thereby play a central role in transcription regulation, DNA repair, DNA replication and chromosomal stability. DNA accessibility is regulated via a complex set of post-translational modifications of histones, also called histone code, and nucleosome remodeling. This Echinus esculentus (Sea urchin) protein is Histone H2B.1, sperm.